Consider the following 482-residue polypeptide: tRNA sulfurtransferase (482 aa).

Positions 61–165 (LAIRDALTRI…DDRLLLIKGR (105 aa)) constitute a THUMP domain. ATP contacts are provided by residues 183 to 184 (LI), Lys265, Gly287, and Gln296. An intrachain disulfide couples Cys344 to Cys456. The Rhodanese domain occupies 404-482 (FGPNDVILDI…GFNNVKVYRP (79 aa)). Cys456 acts as the Cysteine persulfide intermediate in catalysis.

It belongs to the ThiI family.

Its subcellular location is the cytoplasm. The enzyme catalyses [ThiI sulfur-carrier protein]-S-sulfanyl-L-cysteine + a uridine in tRNA + 2 reduced [2Fe-2S]-[ferredoxin] + ATP + H(+) = [ThiI sulfur-carrier protein]-L-cysteine + a 4-thiouridine in tRNA + 2 oxidized [2Fe-2S]-[ferredoxin] + AMP + diphosphate. The catalysed reaction is [ThiS sulfur-carrier protein]-C-terminal Gly-Gly-AMP + S-sulfanyl-L-cysteinyl-[cysteine desulfurase] + AH2 = [ThiS sulfur-carrier protein]-C-terminal-Gly-aminoethanethioate + L-cysteinyl-[cysteine desulfurase] + A + AMP + 2 H(+). The protein operates within cofactor biosynthesis; thiamine diphosphate biosynthesis. Its function is as follows. Catalyzes the ATP-dependent transfer of a sulfur to tRNA to produce 4-thiouridine in position 8 of tRNAs, which functions as a near-UV photosensor. Also catalyzes the transfer of sulfur to the sulfur carrier protein ThiS, forming ThiS-thiocarboxylate. This is a step in the synthesis of thiazole, in the thiamine biosynthesis pathway. The sulfur is donated as persulfide by IscS. This is tRNA sulfurtransferase from Escherichia coli (strain ATCC 8739 / DSM 1576 / NBRC 3972 / NCIMB 8545 / WDCM 00012 / Crooks).